Here is a 464-residue protein sequence, read N- to C-terminus: tRNA modification GTPase MnmE (464 aa).

3 residues coordinate (6S)-5-formyl-5,6,7,8-tetrahydrofolate: arginine 27, glutamate 90, and lysine 129. Residues 222–384 (GITLVLAGSV…LYDKIRTLIS (163 aa)) enclose the TrmE-type G domain. GTP contacts are provided by residues 232–237 (NAGKSS), 251–257 (SSYPGTT), and 276–279 (DTAG). 2 residues coordinate Mg(2+): serine 236 and threonine 257. Lysine 464 provides a ligand contact to (6S)-5-formyl-5,6,7,8-tetrahydrofolate.

It belongs to the TRAFAC class TrmE-Era-EngA-EngB-Septin-like GTPase superfamily. TrmE GTPase family. As to quaternary structure, homodimer. Heterotetramer of two MnmE and two MnmG subunits. It depends on K(+) as a cofactor.

It is found in the cytoplasm. Exhibits a very high intrinsic GTPase hydrolysis rate. Involved in the addition of a carboxymethylaminomethyl (cmnm) group at the wobble position (U34) of certain tRNAs, forming tRNA-cmnm(5)s(2)U34. This Borreliella afzelii (strain PKo) (Borrelia afzelii) protein is tRNA modification GTPase MnmE.